We begin with the raw amino-acid sequence, 264 residues long: Thymidylate synthase (264 aa).

DUMP is bound at residue arginine 21. Residue histidine 51 coordinates (6R)-5,10-methylene-5,6,7,8-tetrahydrofolate. 126–127 lines the dUMP pocket; it reads RR. The Nucleophile role is filled by cysteine 146. Residues 166-169, asparagine 177, and 207-209 contribute to the dUMP site; these read RSVD and HLY. A (6R)-5,10-methylene-5,6,7,8-tetrahydrofolate-binding site is contributed by aspartate 169. Serine 263 lines the (6R)-5,10-methylene-5,6,7,8-tetrahydrofolate pocket.

The protein belongs to the thymidylate synthase family. Bacterial-type ThyA subfamily. Homodimer.

Its subcellular location is the cytoplasm. It carries out the reaction dUMP + (6R)-5,10-methylene-5,6,7,8-tetrahydrofolate = 7,8-dihydrofolate + dTMP. The protein operates within pyrimidine metabolism; dTTP biosynthesis. In terms of biological role, catalyzes the reductive methylation of 2'-deoxyuridine-5'-monophosphate (dUMP) to 2'-deoxythymidine-5'-monophosphate (dTMP) while utilizing 5,10-methylenetetrahydrofolate (mTHF) as the methyl donor and reductant in the reaction, yielding dihydrofolate (DHF) as a by-product. This enzymatic reaction provides an intracellular de novo source of dTMP, an essential precursor for DNA biosynthesis. The protein is Thymidylate synthase of Anoxybacillus flavithermus (strain DSM 21510 / WK1).